The primary structure comprises 159 residues: Protein RseC (159 aa).

Residues 1–72 (MIKEWATVVS…QKVELGIAEG (72 aa)) are Cytoplasmic-facing. The chain crosses the membrane as a helical span at residues 73–95 (SLLSSALLVYMSPLVGLFLIASL). Residues 96–98 (FQL) lie on the Periplasmic side of the membrane. The helical transmembrane segment at 99-121 (LFASDVAALCGAILGGIGGFLIA) threads the bilayer. Residues 122-159 (RGYSRKFAARAEWQPIILSVALPPGLVRFETSSEDASQ) lie on the Cytoplasmic side of the membrane.

The protein belongs to the RseC family.

It is found in the cell inner membrane. May play a role in reduction of the SoxR iron-sulfur cluster. May work together with the RsxABCDGE complex. The sequence is that of Protein RseC from Escherichia coli (strain K12).